The chain runs to 192 residues: Bifunctional protein PyrR (192 aa).

Substrate is bound by residues 49 to 50, Arg-90, 111 to 119, Arg-144, and Val-168; these read SG and DDVLFSGRT. The short motif at 107–119 is the PRPP-binding element; that stretch reads VILVDDVLFSGRT.

This sequence belongs to the purine/pyrimidine phosphoribosyltransferase family. PyrR subfamily.

The catalysed reaction is UMP + diphosphate = 5-phospho-alpha-D-ribose 1-diphosphate + uracil. In terms of biological role, regulates the transcription of the pyrimidine nucleotide (pyr) operon in response to exogenous pyrimidines. Its function is as follows. Also displays a weak uracil phosphoribosyltransferase activity which is not physiologically significant. This chain is Bifunctional protein PyrR, found in Corynebacterium glutamicum (strain ATCC 13032 / DSM 20300 / JCM 1318 / BCRC 11384 / CCUG 27702 / LMG 3730 / NBRC 12168 / NCIMB 10025 / NRRL B-2784 / 534).